The chain runs to 565 residues: Wee1-like protein kinase 2 (565 aa).

Disordered stretches follow at residues 18–78 (YCEE…KSPE) and 169–191 (KSNGKRKTRGDFEEAGPGEGNVE). The segment covering 19–29 (CEEESESEGQE) has biased composition (acidic residues). Basic and acidic residues predominate over residues 31 to 51 (WETRDAHSQIPDRAEGQESEA). S76 is modified (phosphoserine). The Nuclear localization signal motif lies at 173–175 (KRK). Residues 214–492 (FLEVEKIGVG…ARSRVLRPSL (279 aa)) enclose the Protein kinase domain. ATP contacts are provided by residues 220-228 (IGVGEFGTV) and K243. The Nuclear export signal signature appears at 317-331 (KLKDILLQISLGLKY). Catalysis depends on D341, which acts as the Proton acceptor. The Mg(2+) site is built by N346 and D382. The stretch at 495–521 (AEELQQQLNLEKFKTATLERELREAQQ) forms a coiled coil. Positions 521-565 (QAWFSQEERGDAGVSGTPTGSRSTKRLVGGKSAKSSSFTWGKSSP) are disordered. Polar residues predominate over residues 553–565 (AKSSSFTWGKSSP).

The protein belongs to the protein kinase superfamily. Ser/Thr protein kinase family. WEE1 subfamily. In terms of processing, phosphorylation leads to increase its activity.

Its subcellular location is the nucleus. It carries out the reaction L-tyrosyl-[protein] + ATP = O-phospho-L-tyrosyl-[protein] + ADP + H(+). Its function is as follows. Oocyte-specific protein tyrosine kinase that phosphorylates and inhibits CDK1 and acts as a key regulator of meiosis during both prophase I and metaphase II. Required to maintain meiotic arrest in oocytes during the germinal vesicle (GV) stage, a long period of quiescence at dictyate prophase I, by phosphorylating CDK1 at 'Tyr-15', leading to inhibit CDK1 activity and prevent meiotic reentry. Also required for metaphase II exit during egg activation by phosphorylating CDK1 at 'Tyr-15', to ensure exit from meiosis in oocytes and promote pronuclear formation. This Ailuropoda melanoleuca (Giant panda) protein is Wee1-like protein kinase 2 (WEE2).